The chain runs to 293 residues: 3-hydroxybutyrate-oligomer hydrolase (293 aa).

Belongs to the AB hydrolase superfamily.

Its subcellular location is the cytoplasm. The catalysed reaction is (3R)-hydroxybutanoate pentamer + H2O = (3R)-hydroxybutanoate tetramer + (R)-3-hydroxybutanoate + H(+). The enzyme catalyses (3R)-hydroxybutanoate tetramer + H2O = (3R)-hydroxybutanoate trimer + (R)-3-hydroxybutanoate + H(+). It carries out the reaction (3R)-hydroxybutanoate trimer + H2O = (3R)-hydroxybutanoate dimer + (R)-3-hydroxybutanoate + H(+). It catalyses the reaction (3R)-hydroxybutanoate dimer + H2O = 2 (R)-3-hydroxybutanoate + H(+). The catalysed reaction is [(3R)-hydroxybutanoate](n) + H2O = [(3R)-hydroxybutanoate](n-1) + (R)-3-hydroxybutanoate + H(+). Functionally, catalyzes the degradation of various 3-hydroxybutyrate (3HB) oligomers at a high specific activity and artificial amorphous poly(3-hydroxybutyrate) (PHB) at a lower specific activity. Hydrolyzes the 3HB pentamer most efficiently than the tetramer, trimer and dimer. Does not hydrolyze native PHB granules and semicrystalline PHB. Participates in the mobilization of PHB along with other hydrolases. In Cupriavidus necator (strain ATCC 17699 / DSM 428 / KCTC 22496 / NCIMB 10442 / H16 / Stanier 337) (Ralstonia eutropha), this protein is 3-hydroxybutyrate-oligomer hydrolase.